The sequence spans 955 residues: 2-oxoglutarate dehydrogenase E1 component (955 aa).

Belongs to the alpha-ketoglutarate dehydrogenase family. As to quaternary structure, homodimer. Part of the 2-oxoglutarate dehydrogenase (OGDH) complex composed of E1 (2-oxoglutarate dehydrogenase), E2 (dihydrolipoamide succinyltransferase) and E3 (dihydrolipoamide dehydrogenase); the complex contains multiple copies of the three enzymatic components (E1, E2 and E3). It depends on thiamine diphosphate as a cofactor.

It carries out the reaction N(6)-[(R)-lipoyl]-L-lysyl-[protein] + 2-oxoglutarate + H(+) = N(6)-[(R)-S(8)-succinyldihydrolipoyl]-L-lysyl-[protein] + CO2. In terms of biological role, E1 component of the 2-oxoglutarate dehydrogenase (OGDH) complex which catalyzes the decarboxylation of 2-oxoglutarate, the first step in the conversion of 2-oxoglutarate to succinyl-CoA and CO(2). In Bacillus cereus (strain AH820), this protein is 2-oxoglutarate dehydrogenase E1 component.